We begin with the raw amino-acid sequence, 375 residues long: Dual-specificity RNA methyltransferase RlmN (375 aa).

The Proton acceptor role is filled by Glu93. The Radical SAM core domain occupies 99-346; that stretch reads ETNRGTLCVS…TTTRKTRGDD (248 aa). A disulfide bridge links Cys106 with Cys351. [4Fe-4S] cluster is bound by residues Cys113, Cys117, and Cys120. Residues 177–178, Ser209, 231–233, and Asn308 contribute to the S-adenosyl-L-methionine site; these read GE and SLH. Cys351 serves as the catalytic S-methylcysteine intermediate.

Belongs to the radical SAM superfamily. RlmN family. Requires [4Fe-4S] cluster as cofactor.

It is found in the cytoplasm. The enzyme catalyses adenosine(2503) in 23S rRNA + 2 reduced [2Fe-2S]-[ferredoxin] + 2 S-adenosyl-L-methionine = 2-methyladenosine(2503) in 23S rRNA + 5'-deoxyadenosine + L-methionine + 2 oxidized [2Fe-2S]-[ferredoxin] + S-adenosyl-L-homocysteine. It catalyses the reaction adenosine(37) in tRNA + 2 reduced [2Fe-2S]-[ferredoxin] + 2 S-adenosyl-L-methionine = 2-methyladenosine(37) in tRNA + 5'-deoxyadenosine + L-methionine + 2 oxidized [2Fe-2S]-[ferredoxin] + S-adenosyl-L-homocysteine. Its function is as follows. Specifically methylates position 2 of adenine 2503 in 23S rRNA and position 2 of adenine 37 in tRNAs. m2A2503 modification seems to play a crucial role in the proofreading step occurring at the peptidyl transferase center and thus would serve to optimize ribosomal fidelity. The protein is Dual-specificity RNA methyltransferase RlmN of Azoarcus sp. (strain BH72).